Consider the following 215-residue polypeptide: LexA repressor (215 aa).

The H-T-H motif DNA-binding region spans 28–48; that stretch reads RAEIAAELGFSSPNAAEEHLR. Residues Ser-133 and Lys-170 each act as for autocatalytic cleavage activity in the active site.

Belongs to the peptidase S24 family. As to quaternary structure, homodimer.

It catalyses the reaction Hydrolysis of Ala-|-Gly bond in repressor LexA.. In terms of biological role, represses a number of genes involved in the response to DNA damage (SOS response), including recA and lexA. In the presence of single-stranded DNA, RecA interacts with LexA causing an autocatalytic cleavage which disrupts the DNA-binding part of LexA, leading to derepression of the SOS regulon and eventually DNA repair. This Burkholderia cenocepacia (strain ATCC BAA-245 / DSM 16553 / LMG 16656 / NCTC 13227 / J2315 / CF5610) (Burkholderia cepacia (strain J2315)) protein is LexA repressor.